A 539-amino-acid chain; its full sequence is Beta-apo-4'-carotenal oxygenase (539 aa).

Residues Glu-228 and Cys-262 contribute to the active site.

This sequence belongs to the aldehyde dehydrogenase family.

The enzyme catalyses 4'-apo-beta-carotenal + NAD(+) + H2O = neurosporaxanthin + NADH + 2 H(+). Functionally, beta-apo-4'-carotenal oxygenase involved in the last step of synthesis of neurosporaxanthin, a carboxylic apocarotenoid acting as an essential protective pigments and leading to orange pigmentation. Converts the aldehyde beta-apo-4'-carotenal into neurosporaxanthin. Is also able to use shorter apocarotenals as substrates (such as beta-apo-8'-carotenal (C30), beta-apo-10'-carotenal (C27), or the acyclic apocarotenal apo-8'-lycopenal (C30)), indicating wide substrate specificity. Neurosporaxanthin is synthesized from geranyl-geranyl pyrophosphate (GGPP) through several enzymatic activities. Phytoene synthase activity performed by the bifunctional enzyme carAR first produces phytoene from geranyl-geranyl pyrophosphate (GGPP). The phytoene dehydrogenase carB then introduces 4 desaturations to lead to lycopene which is substrate of the carotene cyclase activity of carAR that leads to the production of gamma-carotene. CarB then performs a 5th desaturation reaction to yield torulene. Torulene is the substrate of the dioxidase carT that breaks the molecule, removing five carbon atoms to yield beta-apo-4'-carotenal, whereas the aldehyde dehydrogenase carD mediates the last step by converting beta-apo-4'-carotenal into neurosporaxanthin. The polypeptide is Beta-apo-4'-carotenal oxygenase (Gibberella fujikuroi (strain CBS 195.34 / IMI 58289 / NRRL A-6831) (Bakanae and foot rot disease fungus)).